A 123-amino-acid polypeptide reads, in one-letter code: Transmembrane protein 254 (123 aa).

The next 3 membrane-spanning stretches (helical) occupy residues 15 to 35 (LFWF…VFWP), 63 to 83 (NGYW…LVLC), and 95 to 115 (LLWF…LIAY).

The protein localises to the membrane. The sequence is that of Transmembrane protein 254 from Mus musculus (Mouse).